Here is a 305-residue protein sequence, read N- to C-terminus: 2-oxoacid:ferredoxin oxidoreductase subunit beta (305 aa).

3 residues coordinate [4Fe-4S] cluster: Cys-12, Cys-15, and Cys-46. Residues 44-47 and His-65 contribute to the thiamine diphosphate site; that span reads IGCS. Mg(2+) is bound at residue Asp-90. Residue 91–92 participates in thiamine diphosphate binding; it reads GD. Mg(2+) contacts are provided by Asn-118 and Val-120. A thiamine diphosphate-binding site is contributed by 122–123; it reads GL. Cys-197 contributes to the [4Fe-4S] cluster binding site.

Heterodimer composed of an alpha and a beta subunit. It depends on [4Fe-4S] cluster as a cofactor. Requires thiamine diphosphate as cofactor. Mg(2+) is required as a cofactor.

It catalyses the reaction a 2-oxocarboxylate + 2 oxidized [2Fe-2S]-[ferredoxin] + CoA = an acyl-CoA + 2 reduced [2Fe-2S]-[ferredoxin] + CO2 + H(+). Its function is as follows. Catalyzes the coenzyme A-dependent oxidative decarboxylation of different 2-oxoacids such as 2-oxoglutarate, pyruvate and 2-oxobutyrate to form their CoA derivatives. The chain is 2-oxoacid:ferredoxin oxidoreductase subunit beta from Saccharolobus solfataricus (Sulfolobus solfataricus).